Reading from the N-terminus, the 98-residue chain is Large ribosomal subunit protein uL23 (98 aa).

Belongs to the universal ribosomal protein uL23 family. Part of the 50S ribosomal subunit. Contacts protein L29, and trigger factor when it is bound to the ribosome.

Functionally, one of the early assembly proteins it binds 23S rRNA. One of the proteins that surrounds the polypeptide exit tunnel on the outside of the ribosome. Forms the main docking site for trigger factor binding to the ribosome. The polypeptide is Large ribosomal subunit protein uL23 (Cereibacter sphaeroides (strain ATCC 17025 / ATH 2.4.3) (Rhodobacter sphaeroides)).